The chain runs to 459 residues: Cysteine--tRNA ligase (459 aa).

Cys-31 serves as a coordination point for Zn(2+). Positions Pro-33 to Asn-43 match the 'HIGH' region motif. 3 residues coordinate Zn(2+): Cys-216, His-241, and Glu-245. The short motif at Lys-274–Ser-278 is the 'KMSKS' region element. Lys-277 serves as a coordination point for ATP.

Belongs to the class-I aminoacyl-tRNA synthetase family. Monomer. The cofactor is Zn(2+).

The protein localises to the cytoplasm. It carries out the reaction tRNA(Cys) + L-cysteine + ATP = L-cysteinyl-tRNA(Cys) + AMP + diphosphate. This chain is Cysteine--tRNA ligase, found in Rickettsia massiliae (strain Mtu5).